Reading from the N-terminus, the 86-residue chain is Small ribosomal subunit protein uS15c (86 aa).

This sequence belongs to the universal ribosomal protein uS15 family. As to quaternary structure, part of the 30S ribosomal subunit.

The protein localises to the plastid. This is Small ribosomal subunit protein uS15c (rps15) from Cuscuta gronovii (Common dodder).